An 805-amino-acid polypeptide reads, in one-letter code: Sucrose synthase (805 aa).

The GT-B glycosyltransferase stretch occupies residues 275-752; that stretch reads MVFNVVILSP…GLQRIEEKYT (478 aa).

The protein belongs to the glycosyltransferase 1 family. Plant sucrose synthase subfamily.

It carries out the reaction an NDP-alpha-D-glucose + D-fructose = a ribonucleoside 5'-diphosphate + sucrose + H(+). Functionally, sucrose-cleaving enzyme that provides UDP-glucose and fructose for various metabolic pathways. The chain is Sucrose synthase from Medicago sativa (Alfalfa).